The primary structure comprises 346 residues: Methylthioribose-1-phosphate isomerase (346 aa).

Residues 48–50 (RGA), Arg-88, and Gln-192 each bind substrate. Asp-233 (proton donor) is an active-site residue. 243-244 (NK) serves as a coordination point for substrate.

This sequence belongs to the eIF-2B alpha/beta/delta subunits family. MtnA subfamily.

It carries out the reaction 5-(methylsulfanyl)-alpha-D-ribose 1-phosphate = 5-(methylsulfanyl)-D-ribulose 1-phosphate. It participates in amino-acid biosynthesis; L-methionine biosynthesis via salvage pathway; L-methionine from S-methyl-5-thio-alpha-D-ribose 1-phosphate: step 1/6. In terms of biological role, catalyzes the interconversion of methylthioribose-1-phosphate (MTR-1-P) into methylthioribulose-1-phosphate (MTRu-1-P). The polypeptide is Methylthioribose-1-phosphate isomerase (Alcanivorax borkumensis (strain ATCC 700651 / DSM 11573 / NCIMB 13689 / SK2)).